Here is a 364-residue protein sequence, read N- to C-terminus: Dihydroorotate dehydrogenase (quinone) (364 aa).

FMN-binding positions include 61-65 and Thr85; that span reads AGFDK. Residue Lys65 coordinates substrate. 110-114 is a binding site for substrate; it reads NRMGF. 2 residues coordinate FMN: Asn139 and Asn170. A substrate-binding site is contributed by Asn170. Ser173 serves as the catalytic Nucleophile. Substrate is bound at residue Asn175. Positions 214 and 242 each coordinate FMN. 243 to 244 contributes to the substrate binding site; it reads NT. FMN contacts are provided by residues Gly266, Gly295, and 316 to 317; that span reads YS.

This sequence belongs to the dihydroorotate dehydrogenase family. Type 2 subfamily. Monomer. FMN serves as cofactor.

It localises to the cell membrane. It catalyses the reaction (S)-dihydroorotate + a quinone = orotate + a quinol. It functions in the pathway pyrimidine metabolism; UMP biosynthesis via de novo pathway; orotate from (S)-dihydroorotate (quinone route): step 1/1. In terms of biological role, catalyzes the conversion of dihydroorotate to orotate with quinone as electron acceptor. The polypeptide is Dihydroorotate dehydrogenase (quinone) (Rhodopseudomonas palustris (strain HaA2)).